The sequence spans 459 residues: Glycosyl hydrolase family 109 protein (459 aa).

A signal peptide (tat-type signal) is located at residues 1-45 (MAGDESRSNPFSRRTLLRTSAAAGAGLGVAGLSTGYGAAQPVRPA). NAD(+) is bound by residues 70–71 (NR), Asp-92, 141–144 (WEWH), 161–162 (EC), and Asn-190. Residues Tyr-219, Arg-238, 250 to 253 (YPTH), and Tyr-332 each bind substrate. Tyr-250 provides a ligand contact to NAD(+). Residues 440 to 459 (DFTRGRWQTPHPGVDSPKPA) form a disordered region.

It belongs to the Gfo/Idh/MocA family. Glycosyl hydrolase 109 subfamily. NAD(+) serves as cofactor. In terms of processing, predicted to be exported by the Tat system. The position of the signal peptide cleavage has not been experimentally proven.

Its function is as follows. Glycosidase. The polypeptide is Glycosyl hydrolase family 109 protein (Saccharopolyspora erythraea (strain ATCC 11635 / DSM 40517 / JCM 4748 / NBRC 13426 / NCIMB 8594 / NRRL 2338)).